Consider the following 324-residue polypeptide: Concanavalin B (324 aa).

A signal peptide spans 1 to 25; sequence MGCERKALILMVVIWIMSFWTLSLA. In terms of domain architecture, GH18 spans 30 to 311; it reads TEIAVYWGQR…TNIIRYLNAT (282 aa). Asn-309 is a glycosylation site (N-linked (GlcNAc...) asparagine).

The protein belongs to the glycosyl hydrolase 18 family.

Its function is as follows. May act as a carbohydrate-binding protein. The sequence is that of Concanavalin B from Canavalia ensiformis (Jack bean).